Consider the following 502-residue polypeptide: Neuronal acetylcholine receptor subunit alpha-7 (502 aa).

An N-terminal signal peptide occupies residues 1-22 (MCGRRGGIWLALAAALLHVSLQ). At 23–233 (GEFQRRLYKE…VTMRRRTLYY (211 aa)) the chain is on the extracellular side. Ca(2+) contacts are provided by arginine 42 and valine 44. 3 N-linked (GlcNAc...) asparagine glycosylation sites follow: asparagine 46, asparagine 90, and asparagine 133. Cysteine 150 and cysteine 164 are disulfide-bonded. Ca(2+) contacts are provided by serine 172 and tyrosine 210. A disulfide bridge connects residues cysteine 212 and cysteine 213. The next 3 helical transmembrane spans lie at 234–254 (GLNL…VFLL), 262–282 (ISLG…VAEI), and 295–315 (QYFA…VIVL). Residues 260-267 (EKISLGIT) form an essential for TMEM35A/NACHO-mediated proper subunit assembly and trafficking to cell membrane region. At 316 to 469 (RYHHHDPDGG…WKFAACVVDR (154 aa)) the chain is on the cytoplasmic side. Residues 470 to 490 (LCLMAFSVFTIICTIGILMSA) traverse the membrane as a helical segment.

It belongs to the ligand-gated ion channel (TC 1.A.9) family. Acetylcholine receptor (TC 1.A.9.1) subfamily. Alpha-7/CHRNA7 sub-subfamily. Homopentamer. Can also form heteropentamers with CHRNB2, mainly found in basal forebrain cholinergic neurons. Interacts with RIC3; which is required for proper folding and assembly. Interacts with LYPD6. Interacts with CANX. Post-translationally, glycosylations at Asn-46, Asn-90 and Asn-133 are essential for TMEM35A/NACHO-mediated proper subunit assembly and trafficking to the cell membrane. As to expression, higly expressed in brain. ALso expressed in immune cells sucha as macrophages.

The protein resides in the postsynaptic cell membrane. It is found in the cell membrane. The enzyme catalyses K(+)(in) = K(+)(out). The catalysed reaction is Na(+)(in) = Na(+)(out). It catalyses the reaction Ca(2+)(in) = Ca(2+)(out). It carries out the reaction choline(out) = choline(in). The enzyme catalyses NH4(+)(in) = NH4(+)(out). The catalysed reaction is L-arginine(in) = L-arginine(out). It catalyses the reaction guanidine(out) = guanidine(in). Activated by a myriad of ligands such as acetylcholine, cytisine, nicotine, choline and epibatidine. Oligomeric amyloid-beta protein 42 activates specifially CHRNA7:CHRNB2 nAchRs. Activity is modulated by positive allosteric modulators (PAMs), such as flavonoids, with a wide range of chemical diversity, pharmacological sensitivity and efficacy. AChR activity is inhibited by the antagonists alpha-conotoxons RgIA, ImI and ImII, small disulfide-constrained peptides from cone snails. Its function is as follows. Component of neuronal acetylcholine receptors (nAChRs) that function as pentameric, ligand-gated cation channels with high calcium permeability among other activities. nAChRs are excitatory neurotrasnmitter receptors formed by a collection of nAChR subunits known to mediate synaptic transmission in the nervous system and the neuromuscular junction. Each nAchR subunit confers differential attributes to channel properties, including activation, deactivation and desensitization kinetics, pH sensitivity, cation permeability, and binding to allosteric modulators. CHRNA7 forms homopentameric neuronal acetylcholine receptors abundantly expressed in the central nervous system, characterized by fast desensitization and high calcium permeability. Also forms heteropentamers with CHRNB2, mainly expressed in basal forebrain cholinergic neurons. Involved in the modulation of calcium-dependent signaling pathways and influences the release of neurotransmitters, including dopamine, glutamate and GABA. Involved in the modulation of calcium-dependent signaling pathways and influences the release of neurotransmitters, including dopamine, glutamate and GABA. Also expressed in non-neuronal cells such as immune cells like lymphocytes, monocytes and macrophages. In T cells, activation induces metabotropic signaling that results in an increase of intracellular Ca2+ concentrations, independent of ionotropic receptor functions. In macrophages, required for acetylcholine-mediated inhibition of TNF and other inflammatory cytokine release. Once activated by acetylcholine, nicotine or other agonists, selectively inhibits production of pro-inflammatory cytokines while leaving anti-inflammatory cytokines undisturbed. Stimulates the cholinergic anti-inflammatory pathway, controlling inflammation by inhibiting NFKB nuclear translocation and activating the JAK2-STAT3 pathway, independently of ion channel activity. Also expressed in the urothelium where it modulates reflex bladder activity by increasing intracellular calcium through internal stores and decreasing basal ATP release. This chain is Neuronal acetylcholine receptor subunit alpha-7 (Chrna7), found in Mus musculus (Mouse).